We begin with the raw amino-acid sequence, 414 residues long: S-adenosylmethionine synthase (414 aa).

ATP is bound at residue H11. D13 lines the Mg(2+) pocket. E39 is a K(+) binding site. Residues E52 and Q95 each coordinate L-methionine. Residues 95 to 105 (QSPDIAQGVNM) form a flexible loop region. Residues 169 to 171 (DGK), 245 to 246 (KF), D254, 260 to 261 (RK), A277, and K281 contribute to the ATP site. Residue D254 coordinates L-methionine. K285 contacts L-methionine.

The protein belongs to the AdoMet synthase family. Homotetramer; dimer of dimers. It depends on Mg(2+) as a cofactor. K(+) is required as a cofactor.

The protein localises to the cytoplasm. It catalyses the reaction L-methionine + ATP + H2O = S-adenosyl-L-methionine + phosphate + diphosphate. It functions in the pathway amino-acid biosynthesis; S-adenosyl-L-methionine biosynthesis; S-adenosyl-L-methionine from L-methionine: step 1/1. Functionally, catalyzes the formation of S-adenosylmethionine (AdoMet) from methionine and ATP. The overall synthetic reaction is composed of two sequential steps, AdoMet formation and the subsequent tripolyphosphate hydrolysis which occurs prior to release of AdoMet from the enzyme. This chain is S-adenosylmethionine synthase, found in Synechococcus sp. (strain JA-2-3B'a(2-13)) (Cyanobacteria bacterium Yellowstone B-Prime).